An 82-amino-acid chain; its full sequence is Ice-structuring protein B (82 aa).

The first 23 residues, 1–23 (MALSLFTVGQLIFLFWTMRITEA), serve as a signal peptide directing secretion. A propeptide spans 24-44 (RPDPAAKAAPAAAAVPAAAAP) (removed by a dipeptidylpeptidase). Arg-81 is subject to Arginine amide.

It belongs to the type-I AFP family. In terms of processing, amidated. Detected in liver (at protein level).

The protein resides in the secreted. Its subcellular location is the extracellular space. Functionally, contributes to protect fish blood from freezing at subzero sea water temperatures. Lowers the blood freezing point. Binds to nascent ice crystals and prevents further growth. This chain is Ice-structuring protein B, found in Pseudopleuronectes americanus (Winter flounder).